Here is a 330-residue protein sequence, read N- to C-terminus: MADNSATRVRVPSDRNSRRKIKGEVDIISSLPDVILQHILFSFQTKYAIRTSVLSKRWRHEADAINKALSQYTAPKMMNFHLKINKNNSLHHIKKWTEFAMSRNVENMSLDVRFRSNKIPRFYEINSSVKSLSHRLDLHDVIPRHGVSWTSLKKFSLSYCGLPDESAKILSGCPILEWPMQIVAPQIHCLKLRNTQLPCTLVDVSSLTEAEVLDIIIFPVNLSYNADFLHATMLEMLKKLKNVEKLTFSGSYLQNLSVAEKRGVPFPMFKVKALTLEMKHFVISDIERMLQSSPNLKKLTVRAKDNTGKYLYRYFARLESGSMLELKKGV.

The F-box domain occupies 25–72; that stretch reads VDIISSLPDVILQHILFSFQTKYAIRTSVLSKRWRHEADAINKALSQY.

This Arabidopsis thaliana (Mouse-ear cress) protein is Putative F-box protein At1g57690.